The primary structure comprises 262 residues: Acyl-[acyl-carrier-protein]--UDP-N-acetylglucosamine O-acyltransferase (262 aa).

This sequence belongs to the transferase hexapeptide repeat family. LpxA subfamily. In terms of assembly, homotrimer.

The protein localises to the cytoplasm. The catalysed reaction is a (3R)-hydroxyacyl-[ACP] + UDP-N-acetyl-alpha-D-glucosamine = a UDP-3-O-[(3R)-3-hydroxyacyl]-N-acetyl-alpha-D-glucosamine + holo-[ACP]. Its pathway is glycolipid biosynthesis; lipid IV(A) biosynthesis; lipid IV(A) from (3R)-3-hydroxytetradecanoyl-[acyl-carrier-protein] and UDP-N-acetyl-alpha-D-glucosamine: step 1/6. Its function is as follows. Involved in the biosynthesis of lipid A, a phosphorylated glycolipid that anchors the lipopolysaccharide to the outer membrane of the cell. The polypeptide is Acyl-[acyl-carrier-protein]--UDP-N-acetylglucosamine O-acyltransferase (Yersinia pseudotuberculosis serotype O:1b (strain IP 31758)).